The primary structure comprises 295 residues: Protoheme IX farnesyltransferase (295 aa).

9 consecutive transmembrane segments (helical) span residues 8-28 (VTKP…FLLA), 35-55 (YPLF…GCVF), 74-94 (VLVK…VLGI), 98-118 (LLLY…GFVI), 132-152 (VYGT…GYCA), 162-182 (LILL…IAIF), 208-228 (ITLY…SGYA), 233-253 (LVVA…GYKA), and 264-284 (FVFS…DFNV).

Belongs to the UbiA prenyltransferase family. Protoheme IX farnesyltransferase subfamily.

It localises to the cell inner membrane. It carries out the reaction heme b + (2E,6E)-farnesyl diphosphate + H2O = Fe(II)-heme o + diphosphate. It functions in the pathway porphyrin-containing compound metabolism; heme O biosynthesis; heme O from protoheme: step 1/1. Converts heme B (protoheme IX) to heme O by substitution of the vinyl group on carbon 2 of heme B porphyrin ring with a hydroxyethyl farnesyl side group. The sequence is that of Protoheme IX farnesyltransferase from Yersinia pseudotuberculosis serotype O:1b (strain IP 31758).